The sequence spans 188 residues: Pyridoxal 5'-phosphate synthase subunit PdxT (188 aa).

47–49 (GES) contacts L-glutamine. The Nucleophile role is filled by Cys79. Residues Arg106 and 134 to 135 (IR) each bind L-glutamine. Residues His169 and Glu171 each act as charge relay system in the active site.

The protein belongs to the glutaminase PdxT/SNO family. In terms of assembly, in the presence of PdxS, forms a dodecamer of heterodimers. Only shows activity in the heterodimer.

The enzyme catalyses aldehydo-D-ribose 5-phosphate + D-glyceraldehyde 3-phosphate + L-glutamine = pyridoxal 5'-phosphate + L-glutamate + phosphate + 3 H2O + H(+). The catalysed reaction is L-glutamine + H2O = L-glutamate + NH4(+). The protein operates within cofactor biosynthesis; pyridoxal 5'-phosphate biosynthesis. Functionally, catalyzes the hydrolysis of glutamine to glutamate and ammonia as part of the biosynthesis of pyridoxal 5'-phosphate. The resulting ammonia molecule is channeled to the active site of PdxS. This Caldicellulosiruptor bescii (strain ATCC BAA-1888 / DSM 6725 / KCTC 15123 / Z-1320) (Anaerocellum thermophilum) protein is Pyridoxal 5'-phosphate synthase subunit PdxT.